An 853-amino-acid polypeptide reads, in one-letter code: MATWTQNEPTGVTKRRRWNLEDRASLNKLKHHIAEEGCPQMQYDLAKELLDNSIVEPNLAKGNQSQKAVNWLVSAAHNGHEDAVKLLRQCYNDGSGITAENTDEVRRCLAMTPGERAARKAARELFACLSNGNEHITPKQLERKMRRIYNLQRKRRRRDDDRSSSSSEGEQEPECEPLEDVPTIDLANVERRRLITEAHLVSAASNYSAGQMPSVNDALTLSVPDPRSLDHVPCFYRMIFHPLIFFTLFYHRLLNLIVSIPNVIPLSVRCSVLVAISWWSSRHMLPLVSYYLSLGIMIWATCKMLKTKQQFVDFRIWSGLFLSYGDQNIEADIAEHRFLRNNMKPYLYFFCAFICNLIVYPLVTDAWLPHSELTIISGALTFITMCVSMYASSHQLPDWLVIVSFAVNVLAKYPYEMDEVVSTRWRFLDLRVPTFSSFVIGNGIEFCLNCRTALYLFIPVLLIMMAKRSRWHGVYTFLIPHCVTLSWLQVCIATSQSSTVFGVMRAALGLAGIVLFLPLFGIVALLVPVFVAIDSLGLASEQLRWGSTALACGLVVVLSCILALNRATQKYITMLQLITAITTACLLVLPYMTSSFKDTPRFNAMPRAGLHSLSETNTLPWDRFHALCAQPVHEQPNKIKAQLRCSLLNGMPVIWEGSVTKVEISRVSNFLEDTIANYLPVWLGRMLRCLHGENISQHFKCDPKLDAQCEEWRSVFKTFNAQSGSCTLQRWNRYEYELLVKVGTKRSGRLLGRSTTTDVILRAHHDFGNFTRLLSEGDVVLFYGILHNSRLLADNVQVKLKTIECVECRSRDLGTASIERVVAASPMDARLQDLMRGIKYLLNALLNPLITFK.

Residues 139–179 (KQLERKMRRIYNLQRKRRRRDDDRSSSSSEGEQEPECEPLE) are disordered. Over residues 144-157 (KMRRIYNLQRKRRR) the composition is skewed to basic residues. The span at 169-179 (GEQEPECEPLE) shows a compositional bias: acidic residues. 10 helical membrane-spanning segments follow: residues 238-258 (MIFH…NLIV), 259-279 (SIPN…ISWW), 285-305 (LPLV…CKML), 347-367 (LYFF…TDAW), 373-393 (LTII…YASS), 446-466 (FCLN…IMMA), 473-493 (GVYT…VCIA), 513-533 (IVLF…FVAI), 545-565 (WGST…LALN), and 572-592 (ITML…LPYM). 2 N-linked (GlcNAc...) asparagine glycosylation sites follow: asparagine 694 and asparagine 769.

As to expression, detected in adult brain.

The protein resides in the membrane. Its subcellular location is the endoplasmic reticulum. It localises to the mitochondrion. Its function is as follows. Participates in the regulation of cellular Ca(2+) homeostasis, at least partly, by modulating the filling state of the endoplasmic reticulum Ca(2+) store. In neurons and glial cells, has a role in maintaining neuronal function and integrity during aging. This chain is Wolframin, found in Drosophila melanogaster (Fruit fly).